The sequence spans 846 residues: MSTAAGSRKKHSKLHNEERADITKDEFEAIREALSKEEFRKLFFDYVEEVQDPENRKIYEQEITQLEKERGVDIKFVHPKPGFVVKTSIDGELKCFINIASSPEVARPNSEVGMNPETGGRGLSWSIPMAQTGGRDDCDAKNNHCKVFDVVFHPDALHLSTRDSQFRKALIDTALDAVEREYEVALDRANLKYPKLDYKGIARPTVIRKLAANPTPEEQEPHPLEHMYPTKPPASNSEPKILPMKTKAAPVPEFAVPKYSIKQSHDVDLSEYTDELDAKLHVTVPRSLVVEIELPLLRSTAECQLDVTAKSVYLLSERLGAKYRLKLDLPFVVDDKAGNARFDTEKRRLSITLPVVRKSVNQQRQMHDTLRYLSREDSGVELHSNSESPVEDDADGYMPETPELETAAPPDPPALTPSTFLKDSVHYQLPKFDCNALDNAMAFVLDVAHVQPDSIVTLKTDRSVSVKFATIGSGYYPTHYAFYMELPSVDMEEYHKDHCIESIEAEAWDNNVIMKLFLGAESKAPTSYLAGLHANGLKEYQVYGHYKAKTDKNNECEPNPPRDVQIMRTDDAVVITVRPPHTSITTEEDDEQQQQLHKKPSKKQRKRNKKQRSYSESACEEMLDQQDGPLGRKKDATTPMVPQRKQRSYSECNDSTIGSENVNRGILKRFSRYGPRPSMSDSCSSIDDCGFSSHSCSVDASSSLFSQSFNGIPEEDRTEEGLSESCKKTVRFNDQIMKQVFRHDSSILGQRKKNQKRRNCKLRAQQRRLSEGDSADYEETRDTALKQQGEPSGNKLHDSGLDLTGASASHRTDNNSKSYRTRQDHADADAKNDAMMFEMDDEDDEI.

Disordered stretches follow at residues 1–21, 377–412, 581–657, and 743–846; these read MSTAAGSRKKHSKLHNEERAD, DSGVELHSNSESPVEDDADGYMPETPELETAAPPDP, HTSI…DSTI, and HDSS…DDEI. The residue at position 378 (Ser378) is a Phosphoserine. Over residues 399–408 the composition is skewed to low complexity; sequence PETPELETAA. Basic residues-rich tracts occupy residues 596 to 612 and 750 to 766; these read LHKKPSKKQRKRNKKQR and QRKKNQKRRNCKLRAQQ. The residue at position 770 (Ser770) is a Phosphoserine. Residues 821 to 832 show a composition bias toward basic and acidic residues; sequence TRQDHADADAKN.

It belongs to the PIH1 family. Kintoun subfamily. In terms of assembly, interacts with Pp1alpha-96A, Pp1-87B, Pp1-13C and flw.

It localises to the cytoplasm. In terms of biological role, required for cytoplasmic pre-assembly of axonemal dyneins, thereby playing a central role in motility in cilia and flagella. Involved in pre-assembly of dynein arm complexes in the cytoplasm before intraflagellar transport loads them for the ciliary compartment. The polypeptide is Protein kintoun (Drosophila pseudoobscura pseudoobscura (Fruit fly)).